A 183-amino-acid polypeptide reads, in one-letter code: Phosphopantetheine adenylyltransferase (183 aa).

Substrate is bound at residue S8. ATP is bound by residues 8–9 (SF) and H16. 3 residues coordinate substrate: K40, T72, and R86. ATP is bound by residues 87 to 89 (GLR), E97, and 122 to 128 (YSFLSSS).

Belongs to the bacterial CoaD family. Homohexamer. Mg(2+) is required as a cofactor.

The protein resides in the cytoplasm. The enzyme catalyses (R)-4'-phosphopantetheine + ATP + H(+) = 3'-dephospho-CoA + diphosphate. The protein operates within cofactor biosynthesis; coenzyme A biosynthesis; CoA from (R)-pantothenate: step 4/5. Its function is as follows. Reversibly transfers an adenylyl group from ATP to 4'-phosphopantetheine, yielding dephospho-CoA (dPCoA) and pyrophosphate. The protein is Phosphopantetheine adenylyltransferase of Nostoc punctiforme (strain ATCC 29133 / PCC 73102).